The sequence spans 926 residues: Isoleucine--tRNA ligase (926 aa).

The 'HIGH' region signature appears at 57-67 (PYANGNIHMGH). E555 contributes to the L-isoleucyl-5'-AMP binding site. The short motif at 596-600 (KMSKS) is the 'KMSKS' region element. K599 is a binding site for ATP. C897, C900, C914, and C917 together coordinate Zn(2+).

Belongs to the class-I aminoacyl-tRNA synthetase family. IleS type 1 subfamily. In terms of assembly, monomer. Zn(2+) serves as cofactor.

Its subcellular location is the cytoplasm. The enzyme catalyses tRNA(Ile) + L-isoleucine + ATP = L-isoleucyl-tRNA(Ile) + AMP + diphosphate. Catalyzes the attachment of isoleucine to tRNA(Ile). As IleRS can inadvertently accommodate and process structurally similar amino acids such as valine, to avoid such errors it has two additional distinct tRNA(Ile)-dependent editing activities. One activity is designated as 'pretransfer' editing and involves the hydrolysis of activated Val-AMP. The other activity is designated 'posttransfer' editing and involves deacylation of mischarged Val-tRNA(Ile). The sequence is that of Isoleucine--tRNA ligase from Natranaerobius thermophilus (strain ATCC BAA-1301 / DSM 18059 / JW/NM-WN-LF).